The following is a 130-amino-acid chain: Small ribosomal subunit protein uS9 (130 aa).

Belongs to the universal ribosomal protein uS9 family.

The polypeptide is Small ribosomal subunit protein uS9 (Pseudomonas fluorescens (strain SBW25)).